The following is a 271-amino-acid chain: 3-methyl-2-oxobutanoate hydroxymethyltransferase (271 aa).

Residues D50 and D89 each coordinate Mg(2+). 3-methyl-2-oxobutanoate is bound by residues 50–51, D89, and K118; that span reads DS. Residue E120 participates in Mg(2+) binding. The Proton acceptor role is filled by E187.

This sequence belongs to the PanB family. In terms of assembly, homodecamer; pentamer of dimers. Mg(2+) is required as a cofactor.

It is found in the cytoplasm. The catalysed reaction is 3-methyl-2-oxobutanoate + (6R)-5,10-methylene-5,6,7,8-tetrahydrofolate + H2O = 2-dehydropantoate + (6S)-5,6,7,8-tetrahydrofolate. It participates in cofactor biosynthesis; (R)-pantothenate biosynthesis; (R)-pantoate from 3-methyl-2-oxobutanoate: step 1/2. In terms of biological role, catalyzes the reversible reaction in which hydroxymethyl group from 5,10-methylenetetrahydrofolate is transferred onto alpha-ketoisovalerate to form ketopantoate. This Campylobacter concisus (strain 13826) protein is 3-methyl-2-oxobutanoate hydroxymethyltransferase.